A 146-amino-acid chain; its full sequence is Allograft inflammatory factor 1 (146 aa).

The residue at position 1 (Ser-1) is an N-acetylserine. Lys-10 is modified (N6-acetyllysine). Ser-38 carries the phosphoserine modification. Residues 44 to 79 (RKLEAFKQKYMEFDLNGNGDIDIMSLKRMLEKLGVP) enclose the EF-hand 1 domain. 5 residues coordinate Ca(2+): Asp-57, Asn-59, Asn-61, Asp-63, and Thr-99. Positions 81–115 (THLELKKLIKEVSSGSGETFSYSIFLKMMLGKRSA) constitute an EF-hand 2; degenerate domain. The disordered stretch occupies residues 127–146 (AREQEKPTGPPAKKAISELP).

In terms of assembly, homodimer (Potential). Monomer. Interacts with LCP1. As to expression, microglial cells in the central nervous system and dendritic cells and macrophages in several organs.

It localises to the cytoplasm. The protein resides in the cytoskeleton. The protein localises to the cell projection. It is found in the ruffle membrane. Its subcellular location is the phagocytic cup. Actin-binding protein that enhances membrane ruffling and RAC activation. Enhances the actin-bundling activity of LCP1. Binds calcium. Plays a role in RAC signaling and in phagocytosis. May play a role in macrophage activation and function. Promotes the proliferation of vascular smooth muscle cells and of T-lymphocytes. Enhances lymphocyte migration. Plays a role in vascular inflammation. Has a dual influence on glucose-induced insulin secretion: inhibition at low concentration and stimulation at high concentrations. This Sus scrofa (Pig) protein is Allograft inflammatory factor 1 (AIF1).